A 219-amino-acid chain; its full sequence is Phosphatidylserine decarboxylase proenzyme (219 aa).

Ser-182 functions as the Schiff-base intermediate with substrate; via pyruvic acid in the catalytic mechanism. At Ser-182 the chain carries Pyruvic acid (Ser); by autocatalysis.

It belongs to the phosphatidylserine decarboxylase family. PSD-A subfamily. As to quaternary structure, heterodimer of a large membrane-associated beta subunit and a small pyruvoyl-containing alpha subunit. Requires pyruvate as cofactor. Is synthesized initially as an inactive proenzyme. Formation of the active enzyme involves a self-maturation process in which the active site pyruvoyl group is generated from an internal serine residue via an autocatalytic post-translational modification. Two non-identical subunits are generated from the proenzyme in this reaction, and the pyruvate is formed at the N-terminus of the alpha chain, which is derived from the carboxyl end of the proenzyme. The post-translation cleavage follows an unusual pathway, termed non-hydrolytic serinolysis, in which the side chain hydroxyl group of the serine supplies its oxygen atom to form the C-terminus of the beta chain, while the remainder of the serine residue undergoes an oxidative deamination to produce ammonia and the pyruvoyl prosthetic group on the alpha chain.

It localises to the cell membrane. The enzyme catalyses a 1,2-diacyl-sn-glycero-3-phospho-L-serine + H(+) = a 1,2-diacyl-sn-glycero-3-phosphoethanolamine + CO2. It functions in the pathway phospholipid metabolism; phosphatidylethanolamine biosynthesis; phosphatidylethanolamine from CDP-diacylglycerol: step 2/2. Functionally, catalyzes the formation of phosphatidylethanolamine (PtdEtn) from phosphatidylserine (PtdSer). The sequence is that of Phosphatidylserine decarboxylase proenzyme from Chlorobium phaeovibrioides (strain DSM 265 / 1930) (Prosthecochloris vibrioformis (strain DSM 265)).